A 196-amino-acid polypeptide reads, in one-letter code: MQSERIYLVWAHPRHDSLTAHIADAIHQRAMERKIQVTELDLYRRNFNPVMTPEDEPDWKNMDKRYSPEVHQLYSELLEHDTLVVVFPLWWYSFPAMLKGYIDRVWNNGLAYGDGHKLPFNKVRWVALVGGDKESFVQMGWEKNISDYLKNMCSYLGIEDADVTFLCNTVVFDGEELHASYYQSLLSQVRDMVDAL.

The protein belongs to the NAD(P)H dehydrogenase (quinone) family.

This is an uncharacterized protein from Escherichia coli (strain K12).